Here is a 351-residue protein sequence, read N- to C-terminus: sn-1 oleoyl-lipid 12-desaturase (351 aa).

The next 2 membrane-spanning stretches (helical) occupy residues W46–L66 and W68–V88. A Histidine box-1 motif is present at residues H90–H94. Residues W102–W122 form a helical membrane-spanning segment. The Histidine box-2 motif lies at H126–H130. 2 helical membrane-spanning segments follow: residues I199–V219 and F222–I242. A Histidine box-3 motif is present at residues H290–V294.

Belongs to the fatty acid desaturase type 2 family. Fe(2+) is required as a cofactor.

Its subcellular location is the membrane. It carries out the reaction a 1-[(9Z)-octadecenoyl]-2-acyl-glycerolipid + 2 reduced [2Fe-2S]-[ferredoxin] + O2 + 2 H(+) = a 1-[(9Z,12Z)-octadecdienoyl]-2-acyl-glycerolipid + 2 oxidized [2Fe-2S]-[ferredoxin] + 2 H2O. The protein operates within lipid metabolism; polyunsaturated fatty acid biosynthesis. In terms of biological role, desaturase involved in fatty acid biosynthesis. Introduces a double bond at carbon 12 of oleoyl groups (18:1) attached to the sn-1 position of the glycerol moiety of membrane glycerolipids. This enzyme is involved in chilling tolerance because the phase transition temperature of lipids of cellular membranes depends on the degree of unsaturation of fatty acids of the membrane lipids. This chain is sn-1 oleoyl-lipid 12-desaturase, found in Synechocystis sp. (strain ATCC 27184 / PCC 6803 / Kazusa).